The sequence spans 501 residues: Aldehyde dehydrogenase 1A1 (501 aa).

Ser2 carries the N-acetylserine modification. Residues Lys91 and Lys128 each carry the N6-acetyllysine modification. Residues 167 to 170 (IPWN), 193 to 196 (KPAE), 226 to 227 (GP), and 246 to 247 (GS) each bind NAD(+). Lys252 is subject to N6-acetyllysine. Catalysis depends on Glu269, which acts as the Proton acceptor. Position 269 to 271 (269 to 271 (ELG)) interacts with NAD(+). Cys303 (nucleophile) is an active-site residue. The tract at residues 336–501 (LTQGINQGPQ…VAMKISQKNS (166 aa)) is mediates interaction with PRMT3. Phosphothreonine is present on Thr337. 349 to 353 (EQHDK) contacts NAD(+). 2 positions are modified to N6-acetyllysine: Lys353 and Lys367. An NAD(+)-binding site is contributed by 400–402 (EIF). At Lys410 the chain carries N6-acetyllysine. Ser413 carries the post-translational modification Phosphoserine. 3 positions are modified to N6-acetyllysine: Lys419, Lys435, and Lys495.

Belongs to the aldehyde dehydrogenase family. Homotetramer. Interacts with PRMT3; the interaction is direct, inhibits ALDH1A1 aldehyde dehydrogenase activity and is independent of the methyltransferase activity of PRMT3. Post-translationally, the N-terminus is blocked most probably by acetylation. Strongly expressed in kidney, lung, testis, intestine, stomach, and trachea, but weakly in the liver.

It is found in the cytoplasm. It localises to the cytosol. The protein resides in the cell projection. The protein localises to the axon. The enzyme catalyses an aldehyde + NAD(+) + H2O = a carboxylate + NADH + 2 H(+). It catalyses the reaction all-trans-retinal + NAD(+) + H2O = all-trans-retinoate + NADH + 2 H(+). It carries out the reaction 9-cis-retinal + NAD(+) + H2O = 9-cis-retinoate + NADH + 2 H(+). The catalysed reaction is 11-cis-retinal + NAD(+) + H2O = 11-cis-retinoate + NADH + 2 H(+). The enzyme catalyses 13-cis-retinal + NAD(+) + H2O = 13-cis-retinoate + NADH + 2 H(+). It catalyses the reaction 3-deoxyglucosone + NAD(+) + H2O = 2-dehydro-3-deoxy-D-gluconate + NADH + 2 H(+). It carries out the reaction (E)-4-hydroxynon-2-enal + NAD(+) + H2O = (E)-4-hydroxynon-2-enoate + NADH + 2 H(+). The catalysed reaction is malonaldehyde + NAD(+) + H2O = 3-oxopropanoate + NADH + 2 H(+). The enzyme catalyses hexanal + NAD(+) + H2O = hexanoate + NADH + 2 H(+). It catalyses the reaction propanal + NAD(+) + H2O = propanoate + NADH + 2 H(+). It carries out the reaction acetaldehyde + NAD(+) + H2O = acetate + NADH + 2 H(+). The catalysed reaction is benzaldehyde + NAD(+) + H2O = benzoate + NADH + 2 H(+). The enzyme catalyses 4-aminobutanal + NAD(+) + H2O = 4-aminobutanoate + NADH + 2 H(+). It functions in the pathway cofactor metabolism; retinol metabolism. With respect to regulation, inhibited by chloral hydrate. Cytosolic dehydrogenase that catalyzes the irreversible oxidation of a wide range of aldehydes to their corresponding carboxylic acid. Functions downstream of retinol dehydrogenases and catalyzes the oxidation of retinaldehyde into retinoic acid, the second step in the oxidation of retinol/vitamin A into retinoic acid. This pathway is crucial to control the levels of retinol and retinoic acid, two important molecules which excess can be teratogenic and cytotoxic. Also oxidizes aldehydes resulting from lipid peroxidation like (E)-4-hydroxynon-2-enal/HNE, malonaldehyde and hexanal that form protein adducts and are highly cytotoxic. By participating for instance to the clearance of (E)-4-hydroxynon-2-enal/HNE in the lens epithelium prevents the formation of HNE-protein adducts and lens opacification. Functions also downstream of fructosamine-3-kinase in the fructosamine degradation pathway by catalyzing the oxidation of 3-deoxyglucosone, the carbohydrate product of fructosamine 3-phosphate decomposition, which is itself a potent glycating agent that may react with lysine and arginine side-chains of proteins. Also has an aminobutyraldehyde dehydrogenase activity and is probably part of an alternative pathway for the biosynthesis of GABA/4-aminobutanoate in midbrain, thereby playing a role in GABAergic synaptic transmission. The polypeptide is Aldehyde dehydrogenase 1A1 (Rattus norvegicus (Rat)).